A 265-amino-acid chain; its full sequence is Acrosomal protein SP-10 (265 aa).

The signal sequence occupies residues 1–21; the sequence is MNRFLLLMSLYLLGSARGTSS. Residues 62-181 are disordered; it reads LNTLSEHGSS…EQASGAPISS (120 aa). A run of 16 repeats spans residues 66–70, 71–75, 85–88, 91–95, 110–114, 115–119, 120–123, 125–129, 135–139, 140–144, 145–148, 150–154, 155–159, 160–164, 165–168, and 170–174. Residues 66–95 are 3 X 5 AA repeats of S-E-H-[GA]-S; the sequence is SEHGSSEHGSSKHTVAEHTSGEHAESEHAS. A compositionally biased stretch (basic and acidic residues) spans 69–110; sequence GSSEHGSSKHTVAEHTSGEHAESEHASGEPAATEHAEGEHTV. Positions 85-168 are 4 X 4 AA repeats of S-G-E-H; that stretch reads SGEHAESEHA…ASGEQPSGEH (84 aa). Residues 110 to 174 form a 9 X 5 AA repeats of [SV]-G-E-Q-[PSA] region; that stretch reads VGEQPSGEQP…SGEHASGEQA (65 aa). Polar residues predominate over residues 152 to 163; the sequence is EQPSGEQASGEQ. N-linked (GlcNAc...) asparagine glycosylation occurs at Asn258.

Testis.

The protein localises to the cytoplasmic vesicle. Its subcellular location is the secretory vesicle. It localises to the acrosome. The polypeptide is Acrosomal protein SP-10 (ACRV1) (Homo sapiens (Human)).